Reading from the N-terminus, the 464-residue chain is Soluble pyridine nucleotide transhydrogenase (464 aa).

Residue E35–C44 coordinates FAD.

This sequence belongs to the class-I pyridine nucleotide-disulfide oxidoreductase family. It depends on FAD as a cofactor.

Its subcellular location is the cytoplasm. It carries out the reaction NAD(+) + NADPH = NADH + NADP(+). Conversion of NADPH, generated by peripheral catabolic pathways, to NADH, which can enter the respiratory chain for energy generation. The polypeptide is Soluble pyridine nucleotide transhydrogenase (Marinomonas sp. (strain MWYL1)).